We begin with the raw amino-acid sequence, 270 residues long: Interleukin-1 beta (270 aa).

A propeptide spanning residues 1-118 (MATVPEPTSE…VYDDDAFVCD (118 aa)) is cleaved from the precursor.

Belongs to the IL-1 family. In terms of assembly, monomer. In its precursor form, weakly interacts with full-length MEFV; the mature cytokine does not interact at all. Interacts with integrins ITGAV:ITGBV and ITGA5:ITGB1; integrin-binding is required for IL1B signaling. Interacts with cargo receptor TMED10; the interaction is direct and is required for the secretion of IL1B mature form. Interacts with HSP90AB1; the interaction facilitates cargo translocation into the ERGIC. Interacts with HSP90B1; the interaction facilitates cargo translocation into the ERGIC.

It is found in the cytoplasm. The protein localises to the cytosol. It localises to the secreted. Its subcellular location is the lysosome. The protein resides in the extracellular exosome. In terms of biological role, potent pro-inflammatory cytokine. Initially discovered as the major endogenous pyrogen, induces prostaglandin synthesis, neutrophil influx and activation, T-cell activation and cytokine production, B-cell activation and antibody production, and fibroblast proliferation and collagen production. Promotes Th17 differentiation of T-cells. Synergizes with IL12/interleukin-12 to induce IFNG synthesis from T-helper 1 (Th1) cells. Plays a role in angiogenesis by inducing VEGF production synergistically with TNF and IL6. Involved in transduction of inflammation downstream of pyroptosis: its mature form is specifically released in the extracellular milieu by passing through the gasdermin-D (GSDMD) pore. The polypeptide is Interleukin-1 beta (IL1B) (Phoca vitulina richardii (Pacific harbor seal)).